Here is a 172-residue protein sequence, read N- to C-terminus: Large ribosomal subunit protein uL22y (172 aa).

It belongs to the universal ribosomal protein uL22 family.

This Hordeum vulgare (Barley) protein is Large ribosomal subunit protein uL22y.